Here is a 101-residue protein sequence, read N- to C-terminus: Small ribosomal subunit protein uS14 (101 aa).

The protein belongs to the universal ribosomal protein uS14 family. In terms of assembly, part of the 30S ribosomal subunit. Contacts proteins S3 and S10.

Binds 16S rRNA, required for the assembly of 30S particles and may also be responsible for determining the conformation of the 16S rRNA at the A site. The sequence is that of Small ribosomal subunit protein uS14 from Xylella fastidiosa (strain M23).